The primary structure comprises 302 residues: Sulfate adenylyltransferase subunit 2 (302 aa).

The protein belongs to the PAPS reductase family. CysD subfamily. As to quaternary structure, heterodimer composed of CysD, the smaller subunit, and CysN.

It catalyses the reaction sulfate + ATP + H(+) = adenosine 5'-phosphosulfate + diphosphate. It functions in the pathway sulfur metabolism; hydrogen sulfide biosynthesis; sulfite from sulfate: step 1/3. With CysN forms the ATP sulfurylase (ATPS) that catalyzes the adenylation of sulfate producing adenosine 5'-phosphosulfate (APS) and diphosphate, the first enzymatic step in sulfur assimilation pathway. APS synthesis involves the formation of a high-energy phosphoric-sulfuric acid anhydride bond driven by GTP hydrolysis by CysN coupled to ATP hydrolysis by CysD. This chain is Sulfate adenylyltransferase subunit 2, found in Sodalis glossinidius (strain morsitans).